A 423-amino-acid chain; its full sequence is Glutamate-1-semialdehyde 2,1-aminomutase (423 aa).

An N6-(pyridoxal phosphate)lysine modification is found at Lys258.

This sequence belongs to the class-III pyridoxal-phosphate-dependent aminotransferase family. HemL subfamily. Pyridoxal 5'-phosphate is required as a cofactor.

The protein localises to the cytoplasm. It carries out the reaction (S)-4-amino-5-oxopentanoate = 5-aminolevulinate. The protein operates within porphyrin-containing compound metabolism; protoporphyrin-IX biosynthesis; 5-aminolevulinate from L-glutamyl-tRNA(Glu): step 2/2. The sequence is that of Glutamate-1-semialdehyde 2,1-aminomutase from Pyrobaculum arsenaticum (strain DSM 13514 / JCM 11321 / PZ6).